Consider the following 222-residue polypeptide: Protein GrpE (222 aa).

2 disordered regions span residues 1–21 (MNDG…ENGQ) and 200–222 (KGGP…PEGA).

It belongs to the GrpE family. In terms of assembly, homodimer.

Its subcellular location is the cytoplasm. Its function is as follows. Participates actively in the response to hyperosmotic and heat shock by preventing the aggregation of stress-denatured proteins, in association with DnaK and GrpE. It is the nucleotide exchange factor for DnaK and may function as a thermosensor. Unfolded proteins bind initially to DnaJ; upon interaction with the DnaJ-bound protein, DnaK hydrolyzes its bound ATP, resulting in the formation of a stable complex. GrpE releases ADP from DnaK; ATP binding to DnaK triggers the release of the substrate protein, thus completing the reaction cycle. Several rounds of ATP-dependent interactions between DnaJ, DnaK and GrpE are required for fully efficient folding. The chain is Protein GrpE from Chelativorans sp. (strain BNC1).